Consider the following 408-residue polypeptide: UPF0761 membrane protein azo3165 (408 aa).

Helical transmembrane passes span 29 to 49 (LAFT…GVFG), 92 to 112 (LTLI…ATIE), 131 to 151 (ITVS…SVVA), 172 to 192 (IAAA…LYYA), 197 to 217 (PVRL…FLLM), 220 to 240 (GLGL…TFAA), and 241 to 261 (LPIF…GALI).

The protein belongs to the UPF0761 family.

It localises to the cell inner membrane. The polypeptide is UPF0761 membrane protein azo3165 (Azoarcus sp. (strain BH72)).